Here is a 198-residue protein sequence, read N- to C-terminus: Nucleoid occlusion factor SlmA (198 aa).

The region spanning 9–70 (RNRREEILQA…SLIEFIEDSL (62 aa)) is the HTH tetR-type domain. The segment at residues 33 to 52 (TTAKLAANVGVSEAALYRHF) is a DNA-binding region (H-T-H motif). Residues 117–144 (EQDRLQGRINQLFERIEAQLRQVLKERK) are a coiled coil.

This sequence belongs to the nucleoid occlusion factor SlmA family. In terms of assembly, homodimer. Interacts with FtsZ.

It is found in the cytoplasm. The protein localises to the nucleoid. In terms of biological role, required for nucleoid occlusion (NO) phenomenon, which prevents Z-ring formation and cell division over the nucleoid. Acts as a DNA-associated cell division inhibitor that binds simultaneously chromosomal DNA and FtsZ, and disrupts the assembly of FtsZ polymers. SlmA-DNA-binding sequences (SBS) are dispersed on non-Ter regions of the chromosome, preventing FtsZ polymerization at these regions. This Serratia proteamaculans (strain 568) protein is Nucleoid occlusion factor SlmA.